Consider the following 1010-residue polypeptide: Sodium/potassium-transporting ATPase subunit alpha-3 (1010 aa).

The segment at 1-21 is disordered; sequence MGDKGEKESPKKGKGKRDLDD. Over 1 to 74 the chain is Cytoplasmic; that stretch reads MGDKGEKESP…NALTPPPTTP (74 aa). Positions 69-71 are interaction with phosphoinositide-3 kinase; it reads PPP. Residues 75–95 traverse the membrane as a helical segment; that stretch reads EWVKFCRQLFGGFSILLWIGA. Residues 96-118 lie on the Extracellular side of the membrane; it reads ILCFLAYGIQAGTEDEPSNDNLY. The helical transmembrane segment at 119–139 threads the bilayer; the sequence is LGIVLAAVVIITGCFSYYQEA. Over 140–275 the chain is Cytoplasmic; the sequence is KSSKIMESFK…VGKTPIAVEI (136 aa). A helical transmembrane segment spans residues 276–295; that stretch reads EHFIQLITGVAVFLGISFFV. At 296–307 the chain is on the extracellular side; that stretch reads LSLILGYTWLEA. The helical transmembrane segment at 308–325 threads the bilayer; sequence VIFLIGIIVANVPEGLLA. Residues 326-759 are Cytoplasmic-facing; it reads TVTVCLTLTA…EEGRLIFDNL (434 aa). Catalysis depends on Asp363, which acts as the 4-aspartylphosphate intermediate. Mg(2+) contacts are provided by Asp704 and Asp708. A helical transmembrane segment spans residues 760-779; it reads KKSIAYTLTSNIPEITPFLL. At 780–789 the chain is on the extracellular side; that stretch reads FIMANIPLPL. The helical transmembrane segment at 790 to 810 threads the bilayer; that stretch reads GTITILCIDLGTDMVPAISLA. Residues 811–830 are Cytoplasmic-facing; the sequence is YEAAESDIMKRQPRNPRSDK. The helical transmembrane segment at 831–853 threads the bilayer; sequence LVNERLISMAYGQIGMIQALGGF. Residues 854–905 are Extracellular-facing; sequence FSYFVILAENGFLPSCLVGIRLSWDDRTINDLEDSYGQQWTYEQRKVVEFTC. A helical transmembrane segment spans residues 906-925; the sequence is HTAFFVSIVVVQWADLIICK. At 926–938 the chain is on the cytoplasmic side; sequence TRRNSVFQQGMKN. Ser930 is subject to Phosphoserine; by PKA. A helical membrane pass occupies residues 939-957; sequence KILIFGLFEETALAAFLSY. Residues 958–972 are Extracellular-facing; sequence CPGMDVALRMYPLKP. A helical membrane pass occupies residues 973–993; that stretch reads SWWFCAFPYSFLIFVYDEIRK. At 994–1010 the chain is on the cytoplasmic side; sequence LILRRNPGGWVEKETYY.

The protein belongs to the cation transport ATPase (P-type) (TC 3.A.3) family. Type IIC subfamily. In terms of assembly, the sodium/potassium-transporting ATPase is composed of a catalytic alpha subunit, an auxiliary non-catalytic beta subunit and an additional regulatory subunit.

It is found in the cell membrane. The enzyme catalyses K(+)(out) + Na(+)(in) + ATP + H2O = K(+)(in) + Na(+)(out) + ADP + phosphate + H(+). Its function is as follows. This is the catalytic component of the active enzyme, which catalyzes the hydrolysis of ATP coupled with the exchange of sodium and potassium ions across the plasma membrane. This action creates the electrochemical gradient of sodium and potassium ions, providing the energy for active transport of various nutrients. The polypeptide is Sodium/potassium-transporting ATPase subunit alpha-3 (ATP1A3) (Gallus gallus (Chicken)).